The primary structure comprises 86 residues: Putative membrane protein insertion efficiency factor (86 aa).

This sequence belongs to the UPF0161 family.

The protein localises to the cell inner membrane. Could be involved in insertion of integral membrane proteins into the membrane. The protein is Putative membrane protein insertion efficiency factor of Cellvibrio japonicus (strain Ueda107) (Pseudomonas fluorescens subsp. cellulosa).